The primary structure comprises 170 residues: Peptide methionine sulfoxide reductase MsrA (170 aa).

Cys14 is an active-site residue.

Belongs to the MsrA Met sulfoxide reductase family.

It carries out the reaction L-methionyl-[protein] + [thioredoxin]-disulfide + H2O = L-methionyl-(S)-S-oxide-[protein] + [thioredoxin]-dithiol. It catalyses the reaction [thioredoxin]-disulfide + L-methionine + H2O = L-methionine (S)-S-oxide + [thioredoxin]-dithiol. Its function is as follows. Has an important function as a repair enzyme for proteins that have been inactivated by oxidation. Catalyzes the reversible oxidation-reduction of methionine sulfoxide in proteins to methionine. This Streptomyces avermitilis (strain ATCC 31267 / DSM 46492 / JCM 5070 / NBRC 14893 / NCIMB 12804 / NRRL 8165 / MA-4680) protein is Peptide methionine sulfoxide reductase MsrA.